A 306-amino-acid chain; its full sequence is Protoheme IX farnesyltransferase (306 aa).

The next 8 membrane-spanning stretches (helical) occupy residues 31-50 (VIEL…QGGW), 55-77 (LILG…NCYI), 104-124 (LVFA…ISNW), 125-145 (LAAA…TLWL), 168-188 (WAAV…IVFL), 218-235 (GRAA…ATLA), 238-258 (LLLI…LAGG), and 286-306 (ASIS…LLPF).

The protein belongs to the UbiA prenyltransferase family. Protoheme IX farnesyltransferase subfamily.

It is found in the cell membrane. The enzyme catalyses heme b + (2E,6E)-farnesyl diphosphate + H2O = Fe(II)-heme o + diphosphate. Its pathway is porphyrin-containing compound metabolism; heme O biosynthesis; heme O from protoheme: step 1/1. Functionally, converts heme B (protoheme IX) to heme O by substitution of the vinyl group on carbon 2 of heme B porphyrin ring with a hydroxyethyl farnesyl side group. This Clavibacter sepedonicus (Clavibacter michiganensis subsp. sepedonicus) protein is Protoheme IX farnesyltransferase.